We begin with the raw amino-acid sequence, 475 residues long: Aspartyl/glutamyl-tRNA(Asn/Gln) amidotransferase subunit B (475 aa).

It belongs to the GatB/GatE family. GatB subfamily. Heterotrimer of A, B and C subunits.

The catalysed reaction is L-glutamyl-tRNA(Gln) + L-glutamine + ATP + H2O = L-glutaminyl-tRNA(Gln) + L-glutamate + ADP + phosphate + H(+). It carries out the reaction L-aspartyl-tRNA(Asn) + L-glutamine + ATP + H2O = L-asparaginyl-tRNA(Asn) + L-glutamate + ADP + phosphate + 2 H(+). In terms of biological role, allows the formation of correctly charged Asn-tRNA(Asn) or Gln-tRNA(Gln) through the transamidation of misacylated Asp-tRNA(Asn) or Glu-tRNA(Gln) in organisms which lack either or both of asparaginyl-tRNA or glutaminyl-tRNA synthetases. The reaction takes place in the presence of glutamine and ATP through an activated phospho-Asp-tRNA(Asn) or phospho-Glu-tRNA(Gln). This is Aspartyl/glutamyl-tRNA(Asn/Gln) amidotransferase subunit B from Clostridium novyi (strain NT).